The primary structure comprises 458 residues: Bifunctional protein GlmU (458 aa).

Positions 1–230 are pyrophosphorylase; the sequence is MHKRTAVVLA…EREILGINSR (230 aa). UDP-N-acetyl-alpha-D-glucosamine-binding positions include 9 to 12, K23, Q73, and 78 to 79; these read LAAG and GT. D103 serves as a coordination point for Mg(2+). UDP-N-acetyl-alpha-D-glucosamine contacts are provided by G140, E155, N170, and N228. N228 contacts Mg(2+). The tract at residues 231-251 is linker; the sequence is VQLAEAEAVLQDRLRRKWMDA. Residues 252-458 are N-acetyltransferase; that stretch reads GVTLIDPPSV…FLGRKHKGSQ (207 aa). UDP-N-acetyl-alpha-D-glucosamine is bound by residues R333 and K351. H363 acts as the Proton acceptor in catalysis. The UDP-N-acetyl-alpha-D-glucosamine site is built by Y366 and N377. Acetyl-CoA is bound by residues A380, 386 to 387, S405, A423, and R440; that span reads NY.

The protein in the N-terminal section; belongs to the N-acetylglucosamine-1-phosphate uridyltransferase family. This sequence in the C-terminal section; belongs to the transferase hexapeptide repeat family. In terms of assembly, homotrimer. Mg(2+) serves as cofactor.

It localises to the cytoplasm. It catalyses the reaction alpha-D-glucosamine 1-phosphate + acetyl-CoA = N-acetyl-alpha-D-glucosamine 1-phosphate + CoA + H(+). The enzyme catalyses N-acetyl-alpha-D-glucosamine 1-phosphate + UTP + H(+) = UDP-N-acetyl-alpha-D-glucosamine + diphosphate. Its pathway is nucleotide-sugar biosynthesis; UDP-N-acetyl-alpha-D-glucosamine biosynthesis; N-acetyl-alpha-D-glucosamine 1-phosphate from alpha-D-glucosamine 6-phosphate (route II): step 2/2. It functions in the pathway nucleotide-sugar biosynthesis; UDP-N-acetyl-alpha-D-glucosamine biosynthesis; UDP-N-acetyl-alpha-D-glucosamine from N-acetyl-alpha-D-glucosamine 1-phosphate: step 1/1. The protein operates within bacterial outer membrane biogenesis; LPS lipid A biosynthesis. Catalyzes the last two sequential reactions in the de novo biosynthetic pathway for UDP-N-acetylglucosamine (UDP-GlcNAc). The C-terminal domain catalyzes the transfer of acetyl group from acetyl coenzyme A to glucosamine-1-phosphate (GlcN-1-P) to produce N-acetylglucosamine-1-phosphate (GlcNAc-1-P), which is converted into UDP-GlcNAc by the transfer of uridine 5-monophosphate (from uridine 5-triphosphate), a reaction catalyzed by the N-terminal domain. This is Bifunctional protein GlmU from Heliobacterium modesticaldum (strain ATCC 51547 / Ice1).